The primary structure comprises 65 residues: Large ribosomal subunit protein bL35 (65 aa).

A disordered region spans residues methionine 1–serine 47. The segment covering alanine 10–arginine 24 has biased composition (basic residues). Residues serine 26 to serine 35 are compositionally biased toward polar residues.

Belongs to the bacterial ribosomal protein bL35 family.

In Geobacter metallireducens (strain ATCC 53774 / DSM 7210 / GS-15), this protein is Large ribosomal subunit protein bL35.